The sequence spans 273 residues: Undecaprenyl-diphosphatase (273 aa).

The next 7 helical transmembrane spans lie at 6 to 26 (SLLIAAILGVVEGLTEFLPVS), 45 to 65 (AKTFEVVIQLGSILAVVVMFW), 90 to 110 (LTLIHILLGMIPAVVLGLLFH), 116 to 136 (LFNPINVMYALVVGGLLLIAA), 190 to 210 (YAASEFSFLLAVPMMMGATAL), 222 to 242 (GDISMFAVGFITAFVVALIAI), and 252 to 272 (ISFIPFAIYRFIVAAAVYVVF).

The protein belongs to the UppP family.

It localises to the cell inner membrane. The catalysed reaction is di-trans,octa-cis-undecaprenyl diphosphate + H2O = di-trans,octa-cis-undecaprenyl phosphate + phosphate + H(+). In terms of biological role, catalyzes the dephosphorylation of undecaprenyl diphosphate (UPP). Confers resistance to bacitracin. This Shigella sonnei (strain Ss046) protein is Undecaprenyl-diphosphatase.